Consider the following 375-residue polypeptide: Growth/differentiation factor 8 (375 aa).

The signal sequence occupies residues 1-23 (MQKIVVYVYIYLFVQISVDPVAL). A propeptide spanning residues 24 to 266 (DGSSQPTENT…VTDTPKRSRR (243 aa)) is cleaved from the precursor. The N-linked (GlcNAc...) asparagine glycan is linked to N71. Disulfide bonds link C272/C282, C281/C340, C309/C372, and C313/C374.

This sequence belongs to the TGF-beta family. In terms of assembly, homodimer; disulfide-linked.

It localises to the secreted. Acts specifically as a negative regulator of skeletal muscle growth. In Coturnix coturnix (Common quail), this protein is Growth/differentiation factor 8 (MSTN).